The sequence spans 557 residues: Organic cation/carnitine transporter 2 (557 aa).

The Cytoplasmic portion of the chain corresponds to 1-20 (MRDYDEVTAFLGEWGPFQRL). A helical membrane pass occupies residues 21-41 (IFFLLSASIIPNGFNGMSIVF). Topologically, residues 42-142 (LAGTPEHRCL…DLVCKDDWKA (101 aa)) are extracellular. 3 N-linked (GlcNAc...) asparagine glycosylation sites follow: Asn-57, Asn-64, and Asn-91. A helical membrane pass occupies residues 143-163 (PLTTSLFFVGVLMGSFISGQL). Topologically, residues 164-172 (SDRFGRKNV) are cytoplasmic. Residues 173-193 (LFLTMGMQTGFSFLQLFSVNF) traverse the membrane as a helical segment. Residues 194–197 (EMFT) are Extracellular-facing. Residues 198 to 218 (VLFVLVGMGQISNYVAAFVLG) form a helical membrane-spanning segment. Residue 218 to 225 (GTEILSKS) coordinates ATP. The Cytoplasmic segment spans residues 219–232 (TEILSKSIRIIFAT). The chain crosses the membrane as a helical span at residues 233 to 253 (LGVCIFYAFGFMVLPLFAYFI). Topologically, residues 254–257 (RDWR) are extracellular. The chain crosses the membrane as a helical span at residues 258–278 (MLLLALTVPGVLCGALWWFIP). Residues 279–341 (ESPRWLISQG…YDLVRTRNIR (63 aa)) lie on the Cytoplasmic side of the membrane. Residues 342-362 (IITIMSIILWLTISVGYFGLS) form a helical membrane-spanning segment. Over 363–373 (LDTPNLHGDIY) the chain is Extracellular. Residues 374–394 (VNCFLLAAVEVPAYVLAWLLL) traverse the membrane as a helical segment. Topologically, residues 395–406 (QHLPRRYSISAA) are cytoplasmic. A helical membrane pass occupies residues 407–427 (LFLGGSVLLFIQLVPSELFYL). The Extracellular portion of the chain corresponds to 428 to 430 (STA). The chain crosses the membrane as a helical span at residues 431–451 (LVMVGKFGITSAYSMVYVYTA). The Cytoplasmic segment spans residues 452-462 (ELYPTVVRNMG). The helical transmembrane segment at 463–483 (VGVSSTASRLGSILSPYFVYL) threads the bilayer. At 484-488 (GAYDR) the chain is on the extracellular side. Phosphotyrosine is present on Tyr-486. A helical membrane pass occupies residues 489–509 (FLPYILMGSLTILTAILTLFF). Topologically, residues 510 to 557 (PESFGAPLPDTIDQMLRVKGIKQWQIQSQTRTQKDGGESPTVLKSTAF) are cytoplasmic. The disordered stretch occupies residues 537-557 (SQTRTQKDGGESPTVLKSTAF). The residue at position 548 (Ser-548) is a Phosphoserine. Thr-550 carries the post-translational modification Phosphothreonine.

The protein belongs to the major facilitator (TC 2.A.1) superfamily. Organic cation transporter (TC 2.A.1.19) family. As to quaternary structure, interacts with PDZK1. Expressed in the proximal and distal tubules and in the glomeruli in the kidney, in the myocardium, valves, and arterioles in the heart, in the labyrinthine layer of the placenta, and in the cortex, hippocampus, and cerebellum in the brain. Expressed in Sertoli cells in testis.

The protein resides in the cell membrane. Its subcellular location is the apical cell membrane. It localises to the basal cell membrane. It catalyses the reaction (R)-carnitine(out) + Na(+)(out) = (R)-carnitine(in) + Na(+)(in). It carries out the reaction O-acetyl-(R)-carnitine(out) + Na(+)(out) = O-acetyl-(R)-carnitine(in) + Na(+)(in). The enzyme catalyses O-propanoyl-(R)-carnitine(out) + Na(+)(out) = O-propanoyl-(R)-carnitine(in) + Na(+)(in). The catalysed reaction is glycine betaine(out) + Na(+)(out) = glycine betaine(in) + Na(+)(in). It catalyses the reaction glycine betaine(out) + (R)-carnitine(in) = glycine betaine(in) + (R)-carnitine(out). It carries out the reaction O-butanoyl-(R)-carnitine(out) + Na(+)(out) = O-butanoyl-(R)-carnitine(in) + Na(+)(in). The enzyme catalyses (S)-carnitine(out) + Na(+)(out) = (S)-carnitine(in) + Na(+)(in). The catalysed reaction is an O-acyl-(R)-carnitine(out) + Na(+)(out) = an O-acyl-(R)-carnitine(in) + Na(+)(in). It catalyses the reaction L-glutamyl-L-arginyl-glycyl-L-methionyl-L-threonine(out) + Na(+)(out) = L-glutamyl-L-arginyl-glycyl-L-methionyl-L-threonine(in) + Na(+)(in). It carries out the reaction N,N-dimethylglycine(out) + Na(+)(out) = N,N-dimethylglycine(in) + Na(+)(in). Its activity is regulated as follows. Inhibited by emetine, quinidine and verapamil. The IC(50) of emetine is 4.2 uM. Not inhibited by valproic acid. Transport of (R)-carnitine is stimulated by cholesterol in the plasma membrane. Functionally, sodium-ion dependent, high affinity carnitine transporter. Involved in the active cellular uptake of carnitine. Transports one sodium ion with one molecule of carnitine. Also transports organic cations such as tetraethylammonium (TEA) without the involvement of sodium. Also relative uptake activity ratio of carnitine to TEA is 11.3. May also contribute to regulate the transport of organic compounds in testis across the blood-testis-barrier. This Rattus norvegicus (Rat) protein is Organic cation/carnitine transporter 2 (Slc22a5).